Consider the following 179-residue polypeptide: Large ribosomal subunit protein uL5 (179 aa).

It belongs to the universal ribosomal protein uL5 family. Part of the 50S ribosomal subunit; part of the 5S rRNA/L5/L18/L25 subcomplex. Contacts the 5S rRNA and the P site tRNA. Forms a bridge to the 30S subunit in the 70S ribosome.

Its function is as follows. This is one of the proteins that bind and probably mediate the attachment of the 5S RNA into the large ribosomal subunit, where it forms part of the central protuberance. In the 70S ribosome it contacts protein S13 of the 30S subunit (bridge B1b), connecting the 2 subunits; this bridge is implicated in subunit movement. Contacts the P site tRNA; the 5S rRNA and some of its associated proteins might help stabilize positioning of ribosome-bound tRNAs. The chain is Large ribosomal subunit protein uL5 from Pelobacter propionicus (strain DSM 2379 / NBRC 103807 / OttBd1).